The primary structure comprises 169 residues: Regulator of G-protein signaling rgs-2 (169 aa).

Positions 39-158 (GWSQSFENLM…FLASNIYKTV (120 aa)) constitute an RGS domain.

Post-translationally, may be phosphorylated and activated by egl-4. In terms of tissue distribution, expressed in a subset of neurons including ventral cord and head- and tail-ganglia neurons. Also expressed in non-neuronal cells including pharyngeal and uterine muscles.

Its function is as follows. Weakly inhibits G protein signaling in nervous system, interacting preferentially with the G(O) subfamily member goa-1. In vitro, it acts as a GTPase activator of goa-1. Rgs-1 and rgs-2 redundantly adjust signaling when worms are fed to allow rapid induction of egg-laying behavior. Modulates chemotaxis responses by regulating negatively the sensitivity to quinine in ASH sensory neurons. This chain is Regulator of G-protein signaling rgs-2 (rgs-2), found in Caenorhabditis elegans.